The sequence spans 618 residues: Phosphoenolpyruvate carboxykinase [GTP] (618 aa).

Residues arginine 83 and 217–219 (YGG) contribute to the substrate site. Residues lysine 226 and histidine 245 each contribute to the Mn(2+) site. Serine 267 contacts substrate. 268-273 (MCGKTS) contributes to the GTP binding site. Residue cysteine 269 is part of the active site. Aspartate 286 serves as a coordination point for Mn(2+). A substrate-binding site is contributed by 381-383 (NAR). The GTP site is built by arginine 383 and arginine 415.

It belongs to the phosphoenolpyruvate carboxykinase [GTP] family. Mn(2+) serves as cofactor.

It is found in the cytoplasm. It carries out the reaction oxaloacetate + GTP = phosphoenolpyruvate + GDP + CO2. It functions in the pathway carbohydrate biosynthesis; gluconeogenesis. Catalyzes the conversion of oxaloacetate (OAA) to phosphoenolpyruvate (PEP), the rate-limiting step in the metabolic pathway that produces glucose from lactate and other precursors derived from the citric acid cycle. This is Phosphoenolpyruvate carboxykinase [GTP] from Pyrococcus abyssi (strain GE5 / Orsay).